The following is a 251-amino-acid chain: Cell division protein ZapD (251 aa).

This sequence belongs to the ZapD family. In terms of assembly, interacts with FtsZ.

It localises to the cytoplasm. In terms of biological role, cell division factor that enhances FtsZ-ring assembly. Directly interacts with FtsZ and promotes bundling of FtsZ protofilaments, with a reduction in FtsZ GTPase activity. In Burkholderia mallei (strain NCTC 10247), this protein is Cell division protein ZapD.